Reading from the N-terminus, the 333-residue chain is Adenosine deaminase (333 aa).

2 residues coordinate Zn(2+): histidine 12 and histidine 14. Substrate-binding residues include histidine 14, aspartate 16, and glycine 170. Position 197 (histidine 197) interacts with Zn(2+). Glutamate 200 functions as the Proton donor in the catalytic mechanism. Aspartate 278 serves as a coordination point for Zn(2+). Residue aspartate 279 coordinates substrate.

The protein belongs to the metallo-dependent hydrolases superfamily. Adenosine and AMP deaminases family. Adenosine deaminase subfamily. Requires Zn(2+) as cofactor.

The enzyme catalyses adenosine + H2O + H(+) = inosine + NH4(+). It catalyses the reaction 2'-deoxyadenosine + H2O + H(+) = 2'-deoxyinosine + NH4(+). Functionally, catalyzes the hydrolytic deamination of adenosine and 2-deoxyadenosine. The sequence is that of Adenosine deaminase from Salmonella enteritidis PT4 (strain P125109).